The chain runs to 45 residues: Large ribosomal subunit protein bL34 (45 aa).

A disordered region spans residues 1 to 45 (MTKRTFGGTSRKRKRVSGFRVRMRSHTGRRVIKSRRQKGRERIAV). A compositionally biased stretch (basic residues) spans 10–39 (SRKRKRVSGFRVRMRSHTGRRVIKSRRQKG).

This sequence belongs to the bacterial ribosomal protein bL34 family.

The sequence is that of Large ribosomal subunit protein bL34 from Prochlorococcus marinus (strain MIT 9301).